Consider the following 429-residue polypeptide: Phosphoribosylamine--glycine ligase (429 aa).

The ATP-grasp domain occupies 109 to 316 (KDFLARHKIP…LVELCLKACD (208 aa)). 135-196 (LREKGTPIVV…EEFLDGEEAS (62 aa)) serves as a coordination point for ATP. Mg(2+)-binding residues include glutamate 286 and asparagine 288.

It belongs to the GARS family. Requires Mg(2+) as cofactor. It depends on Mn(2+) as a cofactor.

It carries out the reaction 5-phospho-beta-D-ribosylamine + glycine + ATP = N(1)-(5-phospho-beta-D-ribosyl)glycinamide + ADP + phosphate + H(+). Its pathway is purine metabolism; IMP biosynthesis via de novo pathway; N(1)-(5-phospho-D-ribosyl)glycinamide from 5-phospho-alpha-D-ribose 1-diphosphate: step 2/2. This Haemophilus influenzae (strain ATCC 51907 / DSM 11121 / KW20 / Rd) protein is Phosphoribosylamine--glycine ligase.